A 523-amino-acid polypeptide reads, in one-letter code: Siroheme synthase (523 aa).

The interval 1–203 (MNTFPLFFKL…GNENEAIAQL (203 aa)) is precorrin-2 dehydrogenase /sirohydrochlorin ferrochelatase. Residues 22-23 (DV) and 43-44 (PS) each bind NAD(+). S128 bears the Phosphoserine mark. The tract at residues 231-523 (GEVYIVGAGP…DGGLEQLVID (293 aa)) is uroporphyrinogen-III C-methyltransferase. Residue P240 participates in S-adenosyl-L-methionine binding. D263 functions as the Proton acceptor in the catalytic mechanism. K285 (proton donor) is an active-site residue. S-adenosyl-L-methionine contacts are provided by residues 316–318 (GGD), I321, 346–347 (TA), M398, and A427.

It in the N-terminal section; belongs to the precorrin-2 dehydrogenase / sirohydrochlorin ferrochelatase family. In the C-terminal section; belongs to the precorrin methyltransferase family.

It carries out the reaction uroporphyrinogen III + 2 S-adenosyl-L-methionine = precorrin-2 + 2 S-adenosyl-L-homocysteine + H(+). It catalyses the reaction precorrin-2 + NAD(+) = sirohydrochlorin + NADH + 2 H(+). The enzyme catalyses siroheme + 2 H(+) = sirohydrochlorin + Fe(2+). Its pathway is cofactor biosynthesis; adenosylcobalamin biosynthesis; precorrin-2 from uroporphyrinogen III: step 1/1. The protein operates within cofactor biosynthesis; adenosylcobalamin biosynthesis; sirohydrochlorin from precorrin-2: step 1/1. It functions in the pathway porphyrin-containing compound metabolism; siroheme biosynthesis; precorrin-2 from uroporphyrinogen III: step 1/1. It participates in porphyrin-containing compound metabolism; siroheme biosynthesis; siroheme from sirohydrochlorin: step 1/1. Its pathway is porphyrin-containing compound metabolism; siroheme biosynthesis; sirohydrochlorin from precorrin-2: step 1/1. In terms of biological role, multifunctional enzyme that catalyzes the SAM-dependent methylations of uroporphyrinogen III at position C-2 and C-7 to form precorrin-2 via precorrin-1. Then it catalyzes the NAD-dependent ring dehydrogenation of precorrin-2 to yield sirohydrochlorin. Finally, it catalyzes the ferrochelation of sirohydrochlorin to yield siroheme. The sequence is that of Siroheme synthase from Psychrobacter cryohalolentis (strain ATCC BAA-1226 / DSM 17306 / VKM B-2378 / K5).